A 292-amino-acid chain; its full sequence is Small ribosomal subunit biogenesis GTPase RsgA (292 aa).

Residues 65–223 (KTELIRPTVA…VVDTPGFSSL (159 aa)) enclose the CP-type G domain. GTP-binding positions include 114-117 (NKLD) and 165-173 (GPSGVGKST). Positions 247, 252, 254, and 260 each coordinate Zn(2+).

Belongs to the TRAFAC class YlqF/YawG GTPase family. RsgA subfamily. In terms of assembly, monomer. Associates with 30S ribosomal subunit, binds 16S rRNA. The cofactor is Zn(2+).

The protein localises to the cytoplasm. Its function is as follows. One of several proteins that assist in the late maturation steps of the functional core of the 30S ribosomal subunit. Helps release RbfA from mature subunits. May play a role in the assembly of ribosomal proteins into the subunit. Circularly permuted GTPase that catalyzes slow GTP hydrolysis, GTPase activity is stimulated by the 30S ribosomal subunit. The polypeptide is Small ribosomal subunit biogenesis GTPase RsgA (Alkaliphilus metalliredigens (strain QYMF)).